Here is a 196-residue protein sequence, read N- to C-terminus: dCTP deaminase, dUMP-forming (196 aa).

DCTP contacts are provided by residues 101 to 106 (KSSLGR), Asp119, 127 to 129 (TLE), Gln148, Tyr162, and Gln174. Glu129 serves as the catalytic Proton donor/acceptor.

This sequence belongs to the dCTP deaminase family. Homotrimer.

The catalysed reaction is dCTP + 2 H2O = dUMP + NH4(+) + diphosphate. Its pathway is pyrimidine metabolism; dUMP biosynthesis; dUMP from dCTP: step 1/1. Functionally, bifunctional enzyme that catalyzes both the deamination of dCTP to dUTP and the hydrolysis of dUTP to dUMP without releasing the toxic dUTP intermediate. This is dCTP deaminase, dUMP-forming from Thermobifida fusca (strain YX).